The chain runs to 443 residues: Threonine/serine transporter TdcC (443 aa).

Transmembrane regions (helical) follow at residues 24–44 (WVLG…PISA), 45–65 (GIGG…IAFF), 95–115 (VGGV…LWIY), 140–160 (VVAL…KDLM), 163–183 (VMGY…LSLI), 207–227 (ILVT…FSPI), 259–279 (ASVL…FTLS), 319–339 (ASII…LGTL), 363–383 (LNMI…YINP), 385–405 (ILDL…CLLP), and 423–443 (SNYF…YQLM).

This sequence belongs to the amino acid/polyamine transporter 2 family. SdaC/TdcC subfamily.

Its subcellular location is the cell inner membrane. The catalysed reaction is L-threonine(in) + H(+)(in) = L-threonine(out) + H(+)(out). It carries out the reaction L-serine(in) + H(+)(in) = L-serine(out) + H(+)(out). Its function is as follows. Involved in the import of threonine and serine into the cell, with the concomitant import of a proton (symport system). This Edwardsiella piscicida protein is Threonine/serine transporter TdcC.